A 125-amino-acid chain; its full sequence is MSKMDGLSTGEEEDSTFTSISLEDDTDHSLKSWRSRAESLLPKMMNADMDAVDAENQVELEEKTRLINQVLELQHTLEDLSARVDAVKEENLKLKSENQVLGQYIENLMSASSVFQTTDTKSKRK.

The segment at 1 to 31 (MSKMDGLSTGEEEDSTFTSISLEDDTDHSLK) is disordered. Positions 43–101 (KMMNADMDAVDAENQVELEEKTRLINQVLELQHTLEDLSARVDAVKEENLKLKSENQVL) form a coiled coil.

Belongs to the SCOC family. As to quaternary structure, homodimer. Interacts with ARL1, ARL2 and ARL3. Directly interacts with FEZ1 and UVRAG. The interaction with UVRAG is reduced by amino acid starvation, but the complex is stabilized in the presence of FEZ1. Interacts with NRBF2.

The protein resides in the golgi apparatus membrane. Its subcellular location is the golgi apparatus. It localises to the trans-Golgi network. The protein localises to the cytoplasm. It is found in the cytosol. Its function is as follows. Positive regulator of amino acid starvation-induced autophagy. This is Short coiled-coil protein (Scoc) from Mus musculus (Mouse).